The following is a 433-amino-acid chain: Enolase (433 aa).

Gln-167 lines the (2R)-2-phosphoglycerate pocket. The active-site Proton donor is the Glu-209. Residue Asp-246 coordinates Mg(2+). The Plasminogen-binding motif signature appears at 252 to 260; that stretch reads FYDAEKKEY. The Mg(2+) site is built by Glu-291 and Asp-318. 4 residues coordinate (2R)-2-phosphoglycerate: Lys-343, Arg-372, Ser-373, and Lys-394. The active-site Proton acceptor is Lys-343.

This sequence belongs to the enolase family. As to quaternary structure, component of the RNA degradosome, a multiprotein complex involved in RNA processing and mRNA degradation. Mg(2+) serves as cofactor.

It localises to the cell inner membrane. It is found in the cell outer membrane. Its subcellular location is the cytoplasm. The protein resides in the secreted. The protein localises to the cell surface. It carries out the reaction (2R)-2-phosphoglycerate = phosphoenolpyruvate + H2O. Its pathway is carbohydrate degradation; glycolysis; pyruvate from D-glyceraldehyde 3-phosphate: step 4/5. Functionally, catalyzes the reversible conversion of 2-phosphoglycerate (2-PG) into phosphoenolpyruvate (PEP). It is essential for the degradation of carbohydrates via glycolysis. Its function is as follows. 'Moonlights' as a plasminogen receptor and plasmin activator. Binds host (human) plasminogen in vitro. Binds human plasmin and plasminogen on the cell surface; enhances the activity of host tissue-specific plasminogen activator (tPA). Plasmin bound to bacteria is partially protected from its physiological inhibitor alpha-2AP (SERPINF2). The chain is Enolase from Aeromonas hydrophila.